The following is a 132-amino-acid chain: Ribosome-binding factor A (132 aa).

The protein belongs to the RbfA family. As to quaternary structure, monomer. Binds 30S ribosomal subunits, but not 50S ribosomal subunits or 70S ribosomes.

It is found in the cytoplasm. In terms of biological role, one of several proteins that assist in the late maturation steps of the functional core of the 30S ribosomal subunit. Associates with free 30S ribosomal subunits (but not with 30S subunits that are part of 70S ribosomes or polysomes). Required for efficient processing of 16S rRNA. May interact with the 5'-terminal helix region of 16S rRNA. The protein is Ribosome-binding factor A of Caldicellulosiruptor bescii (strain ATCC BAA-1888 / DSM 6725 / KCTC 15123 / Z-1320) (Anaerocellum thermophilum).